The sequence spans 266 residues: PTS system sorbose-specific EIIC component (266 aa).

The PTS EIIC type-4 domain occupies 1–237; that stretch reads MEISTLQIIA…GGVGVIIALI (237 aa). Transmembrane regions (helical) follow at residues 3–23, 33–53, 79–99, 100–120, 151–171, 183–203, and 219–239; these read ISTL…MGSV, LIAC…VMLG, IISA…IAIA, LPVA…TVVF, VAIP…SSML, QIAG…MMGV, and YLDF…LIYI.

It localises to the cell inner membrane. The phosphoenolpyruvate-dependent sugar phosphotransferase system (PTS), a major carbohydrate active transport system, catalyzes the phosphorylation of incoming sugar substrates concomitant with their translocation across the cell membrane. The enzyme II SorABFM PTS system is involved in L-sorbose transport. The polypeptide is PTS system sorbose-specific EIIC component (Klebsiella pneumoniae).